We begin with the raw amino-acid sequence, 268 residues long: Methionine aminopeptidase (268 aa).

Histidine 79 is a substrate binding site. Positions 97, 108, and 172 each coordinate a divalent metal cation. Histidine 179 provides a ligand contact to substrate. A divalent metal cation contacts are provided by glutamate 205 and glutamate 236.

It belongs to the peptidase M24A family. Methionine aminopeptidase type 1 subfamily. In terms of assembly, monomer. The cofactor is Co(2+). It depends on Zn(2+) as a cofactor. Mn(2+) is required as a cofactor. Requires Fe(2+) as cofactor.

It carries out the reaction Release of N-terminal amino acids, preferentially methionine, from peptides and arylamides.. Its function is as follows. Removes the N-terminal methionine from nascent proteins. The N-terminal methionine is often cleaved when the second residue in the primary sequence is small and uncharged (Met-Ala-, Cys, Gly, Pro, Ser, Thr, or Val). Requires deformylation of the N(alpha)-formylated initiator methionine before it can be hydrolyzed. This Haemophilus influenzae (strain ATCC 51907 / DSM 11121 / KW20 / Rd) protein is Methionine aminopeptidase.